Consider the following 294-residue polypeptide: MINGIINLKKEAGMTSHDAVFKLRKLLQEKKIGHGGTLDPDVVGVLPIAVGKATRVIEYMTEAGKVYEGQVTLGYSTTTEDASGEVVARSSLPAVLTEELVDQTMTTFLGKITQTPPMYSAVKVNGRKLYEYARAGESVERPRREVTISLFERTSPLNFTEDGLCRFSFKVACSKGTYVRTLAVDLGRALGVESHMSFLQRSASAGLTLETAYTLGEIADMVSKQEMSFLLPIEYGVADLPKMVIDDTELTEISFGRRLSLPSQEPLLAAFHGEKVIAILEKRDQEYKPKKVLI.

Asp39 serves as the catalytic Nucleophile.

It belongs to the pseudouridine synthase TruB family. Type 1 subfamily.

The catalysed reaction is uridine(55) in tRNA = pseudouridine(55) in tRNA. In terms of biological role, responsible for synthesis of pseudouridine from uracil-55 in the psi GC loop of transfer RNAs. The protein is tRNA pseudouridine synthase B of Streptococcus pyogenes serotype M6 (strain ATCC BAA-946 / MGAS10394).